Here is a 268-residue protein sequence, read N- to C-terminus: Shikimate dehydrogenase (NADP(+)) (268 aa).

Residues 13–15 (SLS) and Thr-60 each bind shikimate. Lys-64 serves as the catalytic Proton acceptor. Position 76 (Glu-76) interacts with NADP(+). Asn-85 and Asp-100 together coordinate shikimate. NADP(+) contacts are provided by residues 124-128 (GAGGA), 148-153 (NRTMAR), and Ile-209. Tyr-211 contributes to the shikimate binding site. Residue Gly-232 participates in NADP(+) binding.

It belongs to the shikimate dehydrogenase family. As to quaternary structure, homodimer.

It carries out the reaction shikimate + NADP(+) = 3-dehydroshikimate + NADPH + H(+). It participates in metabolic intermediate biosynthesis; chorismate biosynthesis; chorismate from D-erythrose 4-phosphate and phosphoenolpyruvate: step 4/7. Involved in the biosynthesis of the chorismate, which leads to the biosynthesis of aromatic amino acids. Catalyzes the reversible NADPH linked reduction of 3-dehydroshikimate (DHSA) to yield shikimate (SA). The protein is Shikimate dehydrogenase (NADP(+)) of Staphylococcus aureus (strain MSSA476).